The following is a 565-amino-acid chain: Nephronectin (565 aa).

The signal sequence occupies residues 1 to 19 (MDFLLALVLVSSLYLQAAA). The EGF-like 1 domain maps to 52-87 (SWGQCQPVCQPRCKHGECIGPNKCKCHPGYAGKTCN). Intrachain disulfides connect Cys-56/Cys-69, Cys-60/Cys-75, Cys-77/Cys-86, Cys-93/Cys-104, Cys-100/Cys-113, and Cys-115/Cys-127. The EGF-like 2; calcium-binding domain occupies 89–128 (DLNECGLKPRPCKHRCMNTYGSYKCYCLNGYMLMPDGSCS). The region spanning 132-168 (TCSMANCQYGCDVVKGQIRCQCPSPGLQLAPDGRTCV) is the EGF-like 3 domain. An EGF-like 4; calcium-binding domain is found at 169-213 (DVDECATGRASCPRFRQCVNTFGSYICKCHKGFDLMYIGGKYQCH). 6 cysteine pairs are disulfide-bonded: Cys-173-Cys-186, Cys-180-Cys-195, Cys-197-Cys-212, Cys-218-Cys-231, Cys-225-Cys-240, and Cys-242-Cys-253. The EGF-like 5; calcium-binding domain occupies 214–254 (DIDECSLGQYQCSSFARCYNIRGSYKCKCKEGYQGDGLTCV). Residues 301 to 389 (YIPPIITNRP…KPRGDVFIPR (89 aa)) form a disordered region. Residues 304–316 (PIITNRPTSKPTT) are compositionally biased toward low complexity. The segment covering 317-347 (RPTPKPTPIPTPPPPPPLPTELRTPLPPTTP) has biased composition (pro residues). An Integrin interaction motif is present at residues 382–384 (RGD). The MAM domain occupies 420–563 (HSCNFDHGLC…VSLKKGHCSE (144 aa)).

Belongs to the nephronectin family. In terms of assembly, homodimer and homotrimer. As to expression, expressed in kidney and lung and to a lower extent in brain, pregnant uterus, placenta, thyroid gland and blood vessels.

The protein resides in the secreted. It localises to the extracellular space. The protein localises to the extracellular matrix. Functionally, functional ligand of integrin alpha-8/beta-1 in kidney development. Regulates the expression of GDNF with integrin alpha-8/beta-1 which is essential for kidney development. May also play a role in the development and function of various tissues, regulating cell adhesion, spreading and survival through the binding of several integrins. This chain is Nephronectin (NPNT), found in Homo sapiens (Human).